Reading from the N-terminus, the 306-residue chain is Nucleotide-binding protein amb4396 (306 aa).

The span at 1 to 14 (MSDLHSSPTDQTSA) shows a compositional bias: polar residues. Positions 1–20 (MSDLHSSPTDQTSAPAHAGG) are disordered. 29-36 (GMSGAGKT) lines the ATP pocket. 77 to 80 (DIRT) is a GTP binding site.

It belongs to the RapZ-like family.

Functionally, displays ATPase and GTPase activities. This Paramagnetospirillum magneticum (strain ATCC 700264 / AMB-1) (Magnetospirillum magneticum) protein is Nucleotide-binding protein amb4396.